Here is a 375-residue protein sequence, read N- to C-terminus: UDP-4-amino-4,6-dideoxy-N-acetyl-beta-L-altrosamine transaminase (375 aa).

Residues Tyr-6, 26 to 29 (KQLT), Ala-56, and Ser-178 contribute to the substrate site. Residue Lys-183 is modified to N6-(pyridoxal phosphate)lysine. Residues Asn-228 and 313-316 (QVHY) contribute to the substrate site.

The protein belongs to the DegT/DnrJ/EryC1 family.

It catalyses the reaction UDP-4-amino-4,6-dideoxy-N-acetyl-beta-L-altrosamine + 2-oxoglutarate = UDP-2-acetamido-2,6-dideoxy-beta-L-arabino-hex-4-ulose + L-glutamate. Its function is as follows. Catalyzes the second step in the biosynthesis of pseudaminic acid, a sialic-acid-like sugar that is used to modify flagellin. Uses UDP-2-acetamido-2,6-dideoxy-beta-L-arabino-4-hexulose as substrate producing UDP-4-amino-4,6-dideoxy-beta-L-AltNAc. In Helicobacter pylori (strain ATCC 700392 / 26695) (Campylobacter pylori), this protein is UDP-4-amino-4,6-dideoxy-N-acetyl-beta-L-altrosamine transaminase (pseC).